The chain runs to 386 residues: 2-isopropylmalate synthase (386 aa).

In terms of domain architecture, Pyruvate carboxyltransferase spans 12-265 (VRIFDTTLRD…DVGVRTYLLY (254 aa)). The a divalent metal cation site is built by Asp21, His203, His205, and Asn239.

This sequence belongs to the alpha-IPM synthase/homocitrate synthase family. As to quaternary structure, homodimer. A divalent metal cation serves as cofactor.

It catalyses the reaction 3-methyl-2-oxobutanoate + acetyl-CoA + H2O = (2S)-2-isopropylmalate + CoA + H(+). The protein operates within amino-acid biosynthesis; L-leucine biosynthesis; L-leucine from 3-methyl-2-oxobutanoate: step 1/4. With respect to regulation, is not inhibited by leucine. Catalyzes the condensation of the acetyl group of acetyl-CoA with 3-methyl-2-oxobutanoate (2-oxoisovalerate) to form 3-carboxy-3-hydroxy-4-methylpentanoate (2-isopropylmalate). Carries out the first step of the leucine biosynthesis pathway. Also displays a low citramalate synthase activity, using pyruvate as substrate, but is unable to use 2-oxoglutarate. The chain is 2-isopropylmalate synthase from Sulfolobus acidocaldarius (strain ATCC 33909 / DSM 639 / JCM 8929 / NBRC 15157 / NCIMB 11770).